The chain runs to 299 residues: Troponin T, cardiac muscle (299 aa).

Residues 1 to 71 (MSDAEEEVVE…EARDAEDGPV (71 aa)) show a composition bias toward acidic residues. 2 disordered regions span residues 1–97 (MSDA…GERV) and 137–220 (DRIE…EKKK). Residue serine 2 is modified to N-acetylserine. The residue at position 2 (serine 2) is a Phosphoserine. 2 stretches are compositionally biased toward basic and acidic residues: residues 137 to 185 (DRIE…DEAR) and 204 to 220 (QTER…EKKK). Threonine 205 is subject to Phosphothreonine; by PKC/PRKCA. At serine 209 the chain carries Phosphoserine; by PKC/PRKCA. A Phosphothreonine; by PKC/PRKCA and RAF1 modification is found at threonine 214. Threonine 295 carries the post-translational modification Phosphothreonine; by PKC/PRKCA.

This sequence belongs to the troponin T family. Post-translationally, phosphorylation at Thr-214 by PRKCA induces significant reduction in myofilament calcium sensitivity and actomyosin ATPase activity.

Functionally, troponin T is the tropomyosin-binding subunit of troponin, the thin filament regulatory complex which confers calcium-sensitivity to striated muscle actomyosin ATPase activity. In Rattus norvegicus (Rat), this protein is Troponin T, cardiac muscle (Tnnt2).